We begin with the raw amino-acid sequence, 431 residues long: Phosphate regulon sensor protein PhoR (431 aa).

Over 1-9 (MLERLSWKR) the chain is Cytoplasmic. The helical transmembrane segment at 10–28 (LVLELLLCCLPAFILGAFF) threads the bilayer. Topologically, residues 29-32 (GYLP) are periplasmic. Residues 33–51 (WFLLASVTGLLIWHFWNLL) traverse the membrane as a helical segment. Residues 52-431 (RLSWWLWVDR…PERLIAKNSD (380 aa)) are Cytoplasmic-facing. The PAS domain occupies 96–172 (LIKRFRSGAE…RPLNLVLNTG (77 aa)). A Histidine kinase domain is found at 210–425 (NVSHELRTPL…RFSFVIPERL (216 aa)). At His213 the chain carries Phosphohistidine; by autocatalysis.

It is found in the cell inner membrane. It catalyses the reaction ATP + protein L-histidine = ADP + protein N-phospho-L-histidine.. Member of the two-component regulatory system PhoR/PhoB involved in the phosphate regulon genes expression. PhoR may function as a membrane-associated protein kinase that phosphorylates PhoB in response to environmental signals. This is Phosphate regulon sensor protein PhoR (phoR) from Escherichia coli (strain K12).